The sequence spans 382 residues: Lipid-A-disaccharide synthase (382 aa).

The protein belongs to the LpxB family.

The enzyme catalyses 2-N,3-O-bis[(3R)-3-hydroxytetradecanoyl]-alpha-D-glucosaminyl 1-phosphate + UDP-2-N,3-O-bis[(3R)-3-hydroxytetradecanoyl]-alpha-D-glucosamine = lipid A disaccharide (E. coli) + UDP + H(+). It carries out the reaction a lipid X + a UDP-2-N,3-O-bis[(3R)-3-hydroxyacyl]-alpha-D-glucosamine = a lipid A disaccharide + UDP + H(+). Its pathway is glycolipid biosynthesis; lipid IV(A) biosynthesis; lipid IV(A) from (3R)-3-hydroxytetradecanoyl-[acyl-carrier-protein] and UDP-N-acetyl-alpha-D-glucosamine: step 5/6. Functionally, condensation of UDP-2,3-diacylglucosamine and 2,3-diacylglucosamine-1-phosphate to form lipid A disaccharide, a precursor of lipid A, a phosphorylated glycolipid that anchors the lipopolysaccharide to the outer membrane of the cell. The sequence is that of Lipid-A-disaccharide synthase from Salmonella agona (strain SL483).